Reading from the N-terminus, the 315-residue chain is MTTTVPKIFAFHEFSDVAEAVADHVVHAQDGALAPKNERKHSVPNISMNALDMTREASCKSTASAAEGKSGSSGSGSGSSKPKKEKRFKIALSGGSLIEVLHEGLLKRDDVRWGDWDIYFADERLVPFSSNESNYGCAKRKILDLIDTAKYGTPKVYHIDESLIDDPQECADNYEKVLIRGFAGRDSVKLPMFDLFLLGCAPDGHIASLFPNFQDNLREKLAWVVPVENAPSGPSTRISLTIPVICHSHRVTFVVEGATKAPIIKTIMERPEKGLPSSIVNEGAAGRVSWFVDDDALTDVLVTKKKYKFHQGLSI.

Phosphoserine is present on residues Ser-42 and Ser-64. The segment at 59–85 (CKSTASAAEGKSGSSGSGSGSSKPKKE) is disordered. Residues 60–70 (KSTASAAEGKS) show a composition bias toward low complexity.

This sequence belongs to the glucosamine/galactosamine-6-phosphate isomerase family. 6-phosphogluconolactonase subfamily.

The protein localises to the cytoplasm. Its function is as follows. May be involved in regulation of tRNA subcellular distribution. This chain is 6-phosphogluconolactonase-like protein 2 (SOL2), found in Saccharomyces cerevisiae (strain ATCC 204508 / S288c) (Baker's yeast).